A 339-amino-acid polypeptide reads, in one-letter code: Replication factor C subunit 2 (339 aa).

48-55 (YGPPGTGK) serves as a coordination point for ATP.

It belongs to the activator 1 small subunits family. In terms of assembly, heterotetramer of subunits RFC2, RFC3, RFC4 and RFC5 that can form a complex with RFC1. As to expression, expressed in roots, leaves, shoot apical meristem (SAM), flag leaves and panicles.

The protein resides in the nucleus. Its function is as follows. May be involved in DNA replication and thus regulate cell proliferation. The protein is Replication factor C subunit 2 (RFC2) of Oryza sativa subsp. japonica (Rice).